The sequence spans 488 residues: WD repeat-containing protein slp1 (488 aa).

Disordered stretches follow at residues 1–29 and 74–93; these read MEIA…PNSP and CGSP…FIPS. Residues 7–17 are compositionally biased toward low complexity; that stretch reads SSTISPTFSTP. WD repeat units follow at residues 178–215, 219–258, 261–298, 302–341, 344–386, 388–429, and 434–473; these read IDDY…VSAL, DEST…KLRT, GHQA…HQIG, GHSS…PKFT, NHNA…RVNT, DAGS…LTKQ, and AHDT…HVKR.

It belongs to the WD repeat CDC20/Fizzy family. Interacts with cdc13, mad3 and mes1.

Its function is as follows. Required for mad2-dependent spindle checkpoint activation. Promotes ubiquitin-dependent degradation of cdc13 by the anaphase promoting complex/cyclosome (APC/C). This Schizosaccharomyces pombe (strain 972 / ATCC 24843) (Fission yeast) protein is WD repeat-containing protein slp1 (slp1).